The following is a 276-amino-acid chain: Acyl-[acyl-carrier-protein]--UDP-N-acetylglucosamine O-acyltransferase (276 aa).

It belongs to the transferase hexapeptide repeat family. LpxA subfamily. Homotrimer.

It localises to the cytoplasm. It catalyses the reaction a (3R)-hydroxyacyl-[ACP] + UDP-N-acetyl-alpha-D-glucosamine = a UDP-3-O-[(3R)-3-hydroxyacyl]-N-acetyl-alpha-D-glucosamine + holo-[ACP]. It functions in the pathway glycolipid biosynthesis; lipid IV(A) biosynthesis; lipid IV(A) from (3R)-3-hydroxytetradecanoyl-[acyl-carrier-protein] and UDP-N-acetyl-alpha-D-glucosamine: step 1/6. Functionally, involved in the biosynthesis of lipid A, a phosphorylated glycolipid that anchors the lipopolysaccharide to the outer membrane of the cell. This Synechocystis sp. (strain ATCC 27184 / PCC 6803 / Kazusa) protein is Acyl-[acyl-carrier-protein]--UDP-N-acetylglucosamine O-acyltransferase.